Consider the following 471-residue polypeptide: Monocarboxylate transporter 4 (471 aa).

The Cytoplasmic portion of the chain corresponds to 1–17; the sequence is MGGAVVDEGPTGIKAPD. Residues 18–38 traverse the membrane as a helical segment; the sequence is GGWGWAVLFGCFIITGFSYAF. Over 39 to 61 the chain is Extracellular; it reads PKAVSVFFKELMHEFGIGYSDTA. A helical transmembrane segment spans residues 62 to 82; the sequence is WISSILLAMLYGTGPLCSMCV. The Cytoplasmic segment spans residues 83 to 84; the sequence is NR. Residues 85–105 traverse the membrane as a helical segment; that stretch reads FGCRPVMLVGGLFASLGMVAA. Residues 106 to 109 are Extracellular-facing; sequence SFCR. A helical transmembrane segment spans residues 110 to 130; that stretch reads SIIQIYLTTGVITGLGLALNF. Residues 131–149 are Cytoplasmic-facing; it reads QPSLIMLNRYFNKRRPMAN. The helical transmembrane segment at 150–170 threads the bilayer; sequence GLAAAGSPVFLCALSPLGQLL. The Extracellular portion of the chain corresponds to 171–179; the sequence is QDHYGWRGG. The helical transmembrane segment at 180 to 200 threads the bilayer; the sequence is FLILGGLLLNCCVCAALMRPL. At 201–231 the chain is on the cytoplasmic side; it reads VAPQASGGAEPHGPQRPSPRLLDLSVFRDRG. The helical transmembrane segment at 232–252 threads the bilayer; that stretch reads FLIYAVAASIMVLGLFVPPVF. At 253–267 the chain is on the extracellular side; it reads VVSYAKDMGVPDTKA. A helical membrane pass occupies residues 268 to 288; it reads AFLLTILGFIDIFARPTAGFI. The Cytoplasmic portion of the chain corresponds to 289–298; sequence TGLKKVRPYS. Residues 299 to 319 traverse the membrane as a helical segment; sequence VYLFSFAMFFNGFTDLTGSTA. The Extracellular segment spans residues 320–321; it reads SD. Residues 322–342 form a helical membrane-spanning segment; sequence YGGLVVFCIFFGISYGMVGAL. The Cytoplasmic portion of the chain corresponds to 343 to 355; that stretch reads QFEVLMAIVGTQK. The chain crosses the membrane as a helical span at residues 356 to 376; it reads FSSAIGLVLLLEAVAVLIGPP. Over 377-391 the chain is Extracellular; that stretch reads SGGKLLDATKVYKYV. The helical transmembrane segment at 392–412 threads the bilayer; the sequence is FILAGAEVLTSSLVLLLGNFF. The Cytoplasmic portion of the chain corresponds to 413–471; that stretch reads CIGKRKRPEVTKPEEVASEEEKLHKPPVDVRVDSREVEHFLKAEPEKNGEVVHTPETSV. 2 basolateral sorting signal regions span residues 429–447 and 447–471; these read ASEE…VDSR and REVE…ETSV. A Phosphoserine modification is found at Ser-430. Thr-466 carries the phosphothreonine modification. Ser-470 is modified (phosphoserine).

This sequence belongs to the major facilitator superfamily. Monocarboxylate porter (TC 2.A.1.13) family. In terms of assembly, interacts with BSG; interaction mediates SLC16A3 targeting to the plasma membrane. As to expression, detected in testis, small intestine, parotid gland, lung and brain. Small amounts are detected in heart, kidney and spleen. Expressed in skeletal muscle.

Its subcellular location is the cell membrane. The protein resides in the basolateral cell membrane. The catalysed reaction is (S)-lactate(in) + H(+)(in) = (S)-lactate(out) + H(+)(out). It carries out the reaction pyruvate(out) + H(+)(out) = pyruvate(in) + H(+)(in). Proton-dependent transporter of monocarboxylates such as L-lactate and pyruvate. Plays a predominant role in the L-lactate efflux from highly glycolytic cells. The chain is Monocarboxylate transporter 4 (Slc16a3) from Rattus norvegicus (Rat).